We begin with the raw amino-acid sequence, 749 residues long: Cytosolic phospholipase A2 (749 aa).

The interval 1 to 178 is phospholipid binding; the sequence is MSFIDPYQHI…MKKLLGPKNS (178 aa). The residue at position 2 (serine 2) is a Phosphoserine. The C2 domain occupies 6–122; the sequence is PYQHIIVEHQ…KVGEKKEVPF (117 aa). Ca(2+) contacts are provided by aspartate 40, threonine 41, aspartate 43, asparagine 65, aspartate 93, alanine 94, and asparagine 95. Positions 140-740 constitute a PLA2c domain; it reads SCPDLRFSMA…SNVEARRFFN (601 aa). The active-site Nucleophile is the serine 228. Threonine 268 carries the post-translational modification Phosphothreonine. A disordered region spans residues 409–457; sequence GSQSRGSTMEEELENITTKHIVSNDSSDSDDESHEPKGTENEDAGSDYQ. Phosphoserine is present on residues serine 434, serine 435, and serine 437. Serine 505 carries the phosphoserine; by MAPK modification. Serine 515 bears the Phosphoserine mark. A Glycyl lysine isopeptide (Lys-Gly) (interchain with G-Cter in SUMO2) cross-link involves residue lysine 541. The Proton acceptor role is filled by aspartate 549. Lysine 606 is covalently cross-linked (Glycyl lysine isopeptide (Lys-Gly) (interchain with G-Cter in SUMO2)). A phosphoserine mark is found at serine 727 and serine 729.

As to quaternary structure, interacts with KAT5. In terms of processing, phosphorylated at both Ser-505 and Ser-727 in response to mitogenic stimuli. As to expression, expressed in various cells and tissues such as macrophages, neutrophils, fibroblasts and lung endothelium. Expressed in platelets (at protein level).

It localises to the cytoplasm. It is found in the golgi apparatus membrane. The protein localises to the nucleus envelope. The enzyme catalyses a 1,2-diacyl-sn-glycero-3-phosphocholine + H2O = a 1-acyl-sn-glycero-3-phosphocholine + a fatty acid + H(+). It carries out the reaction a 1-O-alkyl-2-acyl-sn-glycero-3-phosphocholine + H2O = a 1-O-alkyl-sn-glycero-3-phosphocholine + a fatty acid + H(+). The catalysed reaction is a 1-acyl-sn-glycero-3-phosphocholine + H2O = sn-glycerol 3-phosphocholine + a fatty acid + H(+). It catalyses the reaction 1-hexadecanoyl-2-(5Z,8Z,11Z,14Z-eicosatetraenoyl)-sn-glycero-3-phosphocholine + H2O = 1-hexadecanoyl-sn-glycero-3-phosphocholine + (5Z,8Z,11Z,14Z)-eicosatetraenoate + H(+). The enzyme catalyses 1,2-di-(5Z,8Z,11Z,14Z-eicosatetraenoyl)-sn-glycero-3-phosphocholine + H2O = 1-(5Z,8Z,11Z,14Z-eicosatetraenoyl)-sn-glycero-3-phosphocholine + (5Z,8Z,11Z,14Z)-eicosatetraenoate + H(+). It carries out the reaction 1-octadecanoyl-2-(5Z,8Z,11Z,14Z-eicosatetraenoyl)-sn-glycero-3-phosphocholine + H2O = 1-octadecanoyl-sn-glycero-3-phosphocholine + (5Z,8Z,11Z,14Z)-eicosatetraenoate + H(+). The catalysed reaction is 1-hexadecanoyl-2-(9Z,12Z-octadecadienoyl)-sn-glycero-3-phosphocholine + H2O = (9Z,12Z)-octadecadienoate + 1-hexadecanoyl-sn-glycero-3-phosphocholine + H(+). It catalyses the reaction 1-octadecanoyl-2-(9Z,12Z,15Z-octadecatrienoyl)-sn-glycero-3-phosphocholine + H2O = (9Z,12Z,15Z)-octadecatrienoate + 1-octadecanoyl-sn-glycero-3-phosphocholine + H(+). The enzyme catalyses 1-(5Z,8Z,11Z,14Z-eicosatetraenoyl)-2-hexadecanoyl-sn-glycero-3-phosphocholine + H2O = 1-(5Z,8Z,11Z,14Z-eicosatetraenoyl)-sn-glycero-3-phosphocholine + hexadecanoate + H(+). It carries out the reaction 1-O-hexadecyl-2-(5Z,8Z,11Z,14Z)-eicosatetraenoyl-sn-glycero-3-phosphocholine + H2O = 1-O-hexadecyl-sn-glycero-3-phosphocholine + (5Z,8Z,11Z,14Z)-eicosatetraenoate + H(+). The catalysed reaction is 1,2-di-(9Z-octadecenoyl)-sn-glycero-3-phospho-(1'-sn-glycerol) + H2O = 1-(9Z-octadecenoyl)-sn-glycero-3-phospho-(1'-sn-glycerol) + (9Z)-octadecenoate + H(+). It catalyses the reaction 1-octadecanoyl-2-(5Z,8Z,11Z,14Z-eicosatetraenoyl)-sn-glycero-3-phosphate + H2O = 1-octadecanoyl-sn-glycero-3-phosphate + (5Z,8Z,11Z,14Z)-eicosatetraenoate + H(+). The enzyme catalyses 1-hexadecanoyl-sn-glycero-3-phosphocholine + H2O = sn-glycerol 3-phosphocholine + hexadecanoate + H(+). It carries out the reaction 2-(prostaglandin E2)-sn-glycero-3-phosphoethanolamine + H2O = sn-glycero-3-phosphoethanolamine + prostaglandin E2 + H(+). The catalysed reaction is 2-[(15S)-hydroxy-(5Z,8Z,11Z,13E)-eicosatetraenoyl]-sn-glycero-3-phosphocholine + H2O = (15S)-hydroxy-(5Z,8Z,11Z,13E)-eicosatetraenoate + sn-glycerol 3-phosphocholine + H(+). It catalyses the reaction 2-[(15R)-hydroxy-(5Z,8Z,11Z,13E)-eicosatetraenoyl]-sn-glycero-3-phosphocholine + H2O = (15R)-hydroxy-(5Z,8Z,11Z,13E)-eicosatetraenoate + sn-glycerol 3-phosphocholine + H(+). The enzyme catalyses 2-(prostaglandin E2)-sn-glycero-3-phosphocholine + H2O = prostaglandin E2 + sn-glycerol 3-phosphocholine + H(+). It carries out the reaction 2-[(11R)-hydroxy-(5Z,8Z,12E,14Z)-eicosatetraenoyl]-sn-glycero-3-phosphocholine + H2O = (11R)-hydroxy-(5Z,8Z,12E,14Z)-eicosatetraenoate + sn-glycerol 3-phosphocholine + H(+). The catalysed reaction is 1-(5Z,8Z,11Z,14Z-eicosatetraenoyl)-2-O-hexadecyl-sn-glycero-3-phosphocholine + H2O = 2-O-hexadecyl-sn-glycero-3-phosphocholine + (5Z,8Z,11Z,14Z)-eicosatetraenoate + H(+). It catalyses the reaction 1-octadecanoyl-2-(5Z,8Z,11Z,14Z-eicosatetraenoyl)-sn-glycero-3-phosphocholine + glycerol = 1-(5Z,8Z,11Z,14Z-eicosatetraenoyl)-glycerol + 1-octadecanoyl-sn-glycero-3-phosphocholine. The enzyme catalyses 1-octadecanoyl-2-(9Z,12Z,15Z-octadecatrienoyl)-sn-glycero-3-phosphocholine + glycerol = 1-(9Z,12Z,15Z-octadecatrienoyl)-glycerol + 1-octadecanoyl-sn-glycero-3-phosphocholine. It functions in the pathway membrane lipid metabolism; glycerophospholipid metabolism. Its pathway is lipid metabolism; arachidonate metabolism. The protein operates within lipid metabolism; prostaglandin biosynthesis. It participates in lipid metabolism; leukotriene B4 biosynthesis. Its activity is regulated as follows. Activated by cytosolic calcium, which is necessary for binding to membrane lipids. Activated by phosphorylation in response to mitogenic stimuli. Activated by ceramide-1-phosphate. Binding (via C2 domain) to ceramide-1-phosphate increases the affinity for membrane lipids. Can be activated by phosphoinositides in the absence of calcium. Inhibited by ANXA5 in a calcium- and substrate-dependent way. Functionally, has primarily calcium-dependent phospholipase and lysophospholipase activities, with a major role in membrane lipid remodeling and biosynthesis of lipid mediators of the inflammatory response. Plays an important role in embryo implantation and parturition through its ability to trigger prostanoid production. Preferentially hydrolyzes the ester bond of the fatty acyl group attached at sn-2 position of phospholipids (phospholipase A2 activity). Selectively hydrolyzes sn-2 arachidonoyl group from membrane phospholipids, providing the precursor for eicosanoid biosynthesis via the cyclooxygenase pathway. In an alternative pathway of eicosanoid biosynthesis, hydrolyzes sn-2 fatty acyl chain of eicosanoid lysophopholipids to release free bioactive eicosanoids. Hydrolyzes the ester bond of the fatty acyl group attached at sn-1 position of phospholipids (phospholipase A1 activity) only if an ether linkage rather than an ester linkage is present at the sn-2 position. This hydrolysis is not stereospecific. Has calcium-independent phospholipase A2 and lysophospholipase activities in the presence of phosphoinositides. Has O-acyltransferase activity. Catalyzes the transfer of fatty acyl chains from phospholipids to a primary hydroxyl group of glycerol (sn-1 or sn-3), potentially contributing to monoacylglycerol synthesis. The protein is Cytosolic phospholipase A2 (PLA2G4A) of Homo sapiens (Human).